Reading from the N-terminus, the 335-residue chain is Glyceraldehyde-3-phosphate dehydrogenase (335 aa).

Residues 12-13, D36, R80, and S122 each bind NAD(+); that span reads RI. D-glyceraldehyde 3-phosphate-binding positions include 152 to 154, T183, R198, 211 to 212, and R234; these read SCT and TG. Residue C153 is the Nucleophile of the active site. An NAD(+)-binding site is contributed by N316.

The protein belongs to the glyceraldehyde-3-phosphate dehydrogenase family. Homotetramer.

It localises to the cytoplasm. It catalyses the reaction D-glyceraldehyde 3-phosphate + phosphate + NAD(+) = (2R)-3-phospho-glyceroyl phosphate + NADH + H(+). Its pathway is carbohydrate degradation; glycolysis; pyruvate from D-glyceraldehyde 3-phosphate: step 1/5. Its function is as follows. Catalyzes the oxidative phosphorylation of glyceraldehyde 3-phosphate (G3P) to 1,3-bisphosphoglycerate (BPG) using the cofactor NAD. The first reaction step involves the formation of a hemiacetal intermediate between G3P and a cysteine residue, and this hemiacetal intermediate is then oxidized to a thioester, with concomitant reduction of NAD to NADH. The reduced NADH is then exchanged with the second NAD, and the thioester is attacked by a nucleophilic inorganic phosphate to produce BPG. This Xanthobacter flavus protein is Glyceraldehyde-3-phosphate dehydrogenase (gap).